Reading from the N-terminus, the 431-residue chain is Tyrosine--tRNA ligase (431 aa).

L-tyrosine is bound at residue Tyr33. A 'HIGH' region motif is present at residues 38-47 (PTADSLHIGS). The L-tyrosine site is built by Tyr172 and Gln176. A 'KMSKS' region motif is present at residues 234 to 238 (KFGKS). Lys237 lines the ATP pocket. In terms of domain architecture, S4 RNA-binding spans 364 to 431 (LDIVTVLNEK…KKNYFVIRVV (68 aa)).

The protein belongs to the class-I aminoacyl-tRNA synthetase family. TyrS type 1 subfamily. Homodimer.

It localises to the cytoplasm. The catalysed reaction is tRNA(Tyr) + L-tyrosine + ATP = L-tyrosyl-tRNA(Tyr) + AMP + diphosphate + H(+). Catalyzes the attachment of tyrosine to tRNA(Tyr) in a two-step reaction: tyrosine is first activated by ATP to form Tyr-AMP and then transferred to the acceptor end of tRNA(Tyr). The polypeptide is Tyrosine--tRNA ligase (Flavobacterium johnsoniae (strain ATCC 17061 / DSM 2064 / JCM 8514 / BCRC 14874 / CCUG 350202 / NBRC 14942 / NCIMB 11054 / UW101) (Cytophaga johnsonae)).